We begin with the raw amino-acid sequence, 745 residues long: Junction plakoglobin (745 aa).

At Met1 the chain carries N-acetylmethionine. Thr14 is a glycosylation site (O-linked (GlcNAc) threonine). 2 positions are modified to phosphoserine: Ser99 and Ser125. ARM repeat units follow at residues 132–171 (NYQDDAELATRALPELTKLLNDEDPVVVTKAAMIVNQLSK), 172–215 (KEAS…LSHH), 216–255 (REGLLAIFKSGGIPALVRMLSSPVESVLFYAITTLHNLLL), 258–297 (EGAKMAVRLADGLQKMVPLLNKNNPKFLAITTDCLQLLAY), 298–341 (GNQE…LSVC), 342–381 (PSNKPAIVEAGGMQALGKHLTSNSPRLVQNCLWTLRNLSD), 383–420 (ATKQEGLESVLKILVNQLSVDDVNVLTCATGTLSNLTC), 423–464 (SKNK…HLTS), 470–510 (EMAQ…NLAL), 512–551 (PANHAPLQEAAVIPRLVQLLVKAHQDAQRHVAAGTQQPYT), 574–613 (PMNRMEIFRLNTIPLFVQLLYSSVENIQRVAAGVLCELAQ), and 615–661 (KEAA…PDYR). The segment at 132 to 297 (NYQDDAELAT…TTDCLQLLAY (166 aa)) is interaction with DSC1 and DSG1. At Ser182 the chain carries Phosphoserine. The interaction with DSC1 stretch occupies residues 574–661 (PMNRMEIFRL…ISEDKNPDYR (88 aa)). Ser665 and Ser730 each carry phosphoserine.

Belongs to the beta-catenin family. Homodimer. Component of an E-cadherin/catenin adhesion complex composed of at least E-cadherin/CDH1 and gamma-catenin/JUP, and possibly alpha-catenin/CTNNA1; the complex is located to adherens junctions. The stable association of CTNNA1 is controversial as CTNNA1 was shown not to bind to F-actin when assembled in the complex. Interacts with MUC1. Interacts with CAV1. Interacts with PTPRJ. Interacts with DSG1. Interacts with DSC1 and DSC2. Interacts with PKP2. Interacts with PKP3 (via N-terminus); the interaction is required for PKP3 localization to desmosome cell-cell junctions. Interacts with DSG4. May be phosphorylated by FER.

Its subcellular location is the cell junction. The protein localises to the adherens junction. It is found in the desmosome. The protein resides in the cytoplasm. It localises to the cytoskeleton. Its subcellular location is the cell membrane. The protein localises to the nucleus. Functionally, common junctional plaque protein. The membrane-associated plaques are architectural elements in an important strategic position to influence the arrangement and function of both the cytoskeleton and the cells within the tissue. The presence of plakoglobin in both the desmosomes and in the intermediate junctions suggests that it plays a central role in the structure and function of submembranous plaques. Acts as a substrate for VE-PTP and is required by it to stimulate VE-cadherin function in endothelial cells. Can replace beta-catenin in E-cadherin/catenin adhesion complexes which are proposed to couple cadherins to the actin cytoskeleton. This Bos taurus (Bovine) protein is Junction plakoglobin.